A 465-amino-acid chain; its full sequence is Poly(A) polymerase I (465 aa).

Active-site residues include aspartate 80, aspartate 82, and aspartate 162. Residues 429-465 (SAPPDQKGMLNELDEEPSPRRRTRRPRKRAPRREGTA) are disordered. The span at 448-459 (RRRTRRPRKRAP) shows a compositional bias: basic residues.

It belongs to the tRNA nucleotidyltransferase/poly(A) polymerase family.

The enzyme catalyses RNA(n) + ATP = RNA(n)-3'-adenine ribonucleotide + diphosphate. In terms of biological role, adds poly(A) tail to the 3' end of many RNAs, which usually targets these RNAs for decay. Plays a significant role in the global control of gene expression, through influencing the rate of transcript degradation, and in the general RNA quality control. This Escherichia coli O157:H7 protein is Poly(A) polymerase I.